The primary structure comprises 266 residues: Thymidylate synthase (266 aa).

Residues R20 and 129–130 (RR) each bind dUMP. The active-site Nucleophile is C149. Residues 169–172 (RSCD), N180, and 210–212 (HVY) contribute to the dUMP site. D172 contacts (6R)-5,10-methylene-5,6,7,8-tetrahydrofolate. (6R)-5,10-methylene-5,6,7,8-tetrahydrofolate is bound at residue A265.

This sequence belongs to the thymidylate synthase family. Bacterial-type ThyA subfamily. Homodimer.

The protein resides in the cytoplasm. It catalyses the reaction dUMP + (6R)-5,10-methylene-5,6,7,8-tetrahydrofolate = 7,8-dihydrofolate + dTMP. It participates in pyrimidine metabolism; dTTP biosynthesis. In terms of biological role, catalyzes the reductive methylation of 2'-deoxyuridine-5'-monophosphate (dUMP) to 2'-deoxythymidine-5'-monophosphate (dTMP) while utilizing 5,10-methylenetetrahydrofolate (mTHF) as the methyl donor and reductant in the reaction, yielding dihydrofolate (DHF) as a by-product. This enzymatic reaction provides an intracellular de novo source of dTMP, an essential precursor for DNA biosynthesis. This Bifidobacterium longum (strain NCC 2705) protein is Thymidylate synthase.